Consider the following 955-residue polypeptide: Coiled-coil domain-containing protein 146 (955 aa).

Residues 1-17 (MEDSSTDTEKEEEEEKD) show a composition bias toward acidic residues. The interval 1–22 (MEDSSTDTEKEEEEEKDEKDQE) is disordered. Coiled coils occupy residues 114–141 (EAFS…KERE), 169–321 (GEME…AREN), 400–461 (STLS…LLRM), 534–640 (KAHQ…RNES), and 667–832 (NGEI…MKQA).

Interacts with CCDC38 and CCDC42. Interacts with intraflagellar transport proteins IFT20 and IFT88. As to quaternary structure, (Microbial infection) Interacts with Chlamydia trachomatis incM/YT288. In host cells infected with C.trachomatis incM, CCDC146 is recruited to the periphery of the pathogen-containing vacuole but recruitment is not dependent on incM. As to expression, widely expressed.

The protein resides in the cytoplasm. Its subcellular location is the cytoskeleton. The protein localises to the microtubule organizing center. It is found in the centrosome. It localises to the centriole. The protein resides in the flagellum axoneme. Its subcellular location is the cilium basal body. The protein localises to the midbody. Its function is as follows. Essential for sperm flagellum biogenesis and male fertility. The sequence is that of Coiled-coil domain-containing protein 146 (CCDC146) from Homo sapiens (Human).